Reading from the N-terminus, the 573-residue chain is 2-isopropylmalate synthase (573 aa).

A Pyruvate carboxyltransferase domain is found at 37-314; sequence PRWLSTDLRD…DPQIDFSNID (278 aa). 4 residues coordinate Mg(2+): D46, H253, H255, and N289. The segment at 456-573 is regulatory domain; it reads NPRNPWGRIQ…VVSAVNRAAR (118 aa).

This sequence belongs to the alpha-IPM synthase/homocitrate synthase family. LeuA type 2 subfamily. Homodimer. It depends on Mg(2+) as a cofactor.

The protein resides in the cytoplasm. It catalyses the reaction 3-methyl-2-oxobutanoate + acetyl-CoA + H2O = (2S)-2-isopropylmalate + CoA + H(+). It participates in amino-acid biosynthesis; L-leucine biosynthesis; L-leucine from 3-methyl-2-oxobutanoate: step 1/4. Functionally, catalyzes the condensation of the acetyl group of acetyl-CoA with 3-methyl-2-oxobutanoate (2-ketoisovalerate) to form 3-carboxy-3-hydroxy-4-methylpentanoate (2-isopropylmalate). The chain is 2-isopropylmalate synthase from Streptomyces avermitilis (strain ATCC 31267 / DSM 46492 / JCM 5070 / NBRC 14893 / NCIMB 12804 / NRRL 8165 / MA-4680).